The sequence spans 485 residues: ATP-dependent rRNA helicase RRP3 (485 aa).

Basic residues predominate over residues 1-10 (MPVLKKRKLA). Residues 1-55 (MPVLKKRKLAHTAQPDPIVSDLESSSSEASQQSHDEQLTAANEQDDESPQVQREE) are disordered. Positions 20-32 (SDLESSSSEASQQ) are enriched in low complexity. A Q motif motif is present at residues 59-87 (KSFKDLGIIDSLCEACEALGYKSPTPIQA). A Helicase ATP-binding domain is found at 90–261 (IPLALQGRDL…RASLSNPLRV (172 aa)). 103–110 (AETGSGKT) is a binding site for ATP. Residues 209–212 (DEAD) carry the DEAD box motif. The region spanning 285 to 433 (YKDIYLVYLL…EYKVEKEEVM (149 aa)) is the Helicase C-terminal domain. Residues 449 to 458 (EMKDLHEKRG) are compositionally biased toward basic and acidic residues. Residues 449-485 (EMKDLHEKRGSRGATLKGRRPAKGAKRGRDEMDREEG) are disordered. A compositionally biased stretch (basic residues) spans 465-474 (KGRRPAKGAK). Over residues 475–485 (RGRDEMDREEG) the composition is skewed to basic and acidic residues.

This sequence belongs to the DEAD box helicase family. DDX47/RRP3 subfamily. In terms of assembly, interacts with the SSU processome.

The protein localises to the nucleus. It carries out the reaction ATP + H2O = ADP + phosphate + H(+). In terms of biological role, ATP-dependent rRNA helicase required for pre-ribosomal RNA processing. Involved in the maturation of the 35S-pre-rRNA and to its cleavage to mature 18S rRNA. The chain is ATP-dependent rRNA helicase RRP3 from Ajellomyces capsulatus (strain NAm1 / WU24) (Darling's disease fungus).